The sequence spans 469 residues: Aspartyl/glutamyl-tRNA(Asn/Gln) amidotransferase subunit B (469 aa).

Belongs to the GatB/GatE family. GatB subfamily. As to quaternary structure, heterotrimer of A, B and C subunits.

The catalysed reaction is L-glutamyl-tRNA(Gln) + L-glutamine + ATP + H2O = L-glutaminyl-tRNA(Gln) + L-glutamate + ADP + phosphate + H(+). It carries out the reaction L-aspartyl-tRNA(Asn) + L-glutamine + ATP + H2O = L-asparaginyl-tRNA(Asn) + L-glutamate + ADP + phosphate + 2 H(+). In terms of biological role, allows the formation of correctly charged Asn-tRNA(Asn) or Gln-tRNA(Gln) through the transamidation of misacylated Asp-tRNA(Asn) or Glu-tRNA(Gln) in organisms which lack either or both of asparaginyl-tRNA or glutaminyl-tRNA synthetases. The reaction takes place in the presence of glutamine and ATP through an activated phospho-Asp-tRNA(Asn) or phospho-Glu-tRNA(Gln). This is Aspartyl/glutamyl-tRNA(Asn/Gln) amidotransferase subunit B from Thermus thermophilus (strain ATCC 27634 / DSM 579 / HB8).